The chain runs to 154 residues: Protein-export protein SecB (154 aa).

This sequence belongs to the SecB family. In terms of assembly, homotetramer, a dimer of dimers. One homotetramer interacts with 1 SecA dimer.

Its subcellular location is the cytoplasm. One of the proteins required for the normal export of preproteins out of the cell cytoplasm. It is a molecular chaperone that binds to a subset of precursor proteins, maintaining them in a translocation-competent state. It also specifically binds to its receptor SecA. The protein is Protein-export protein SecB of Blochmanniella pennsylvanica (strain BPEN).